The following is a 101-amino-acid chain: uncharacterized protein (101 aa).

Helical transmembrane passes span 10 to 32 (FLPN…FFLY), 45 to 67 (LGIW…LPLI), and 77 to 99 (IAFT…ILSH).

The protein localises to the cell membrane. This is an uncharacterized protein from Bacillus subtilis (strain 168).